The sequence spans 238 residues: ATP-dependent dethiobiotin synthetase BioD (238 aa).

Residue 13–18 coordinates ATP; the sequence is EIGKTV. Thr-17 is a binding site for Mg(2+). Residue Lys-38 is part of the active site. Residue Thr-42 participates in substrate binding. Mg(2+)-binding residues include Arg-59 and Glu-111. ATP is bound by residues 111-114, 175-176, and 204-206; these read EGAG, NQ, and PLL.

It belongs to the dethiobiotin synthetase family. Homodimer. It depends on Mg(2+) as a cofactor.

It localises to the cytoplasm. The enzyme catalyses (7R,8S)-7,8-diammoniononanoate + CO2 + ATP = (4R,5S)-dethiobiotin + ADP + phosphate + 3 H(+). Its pathway is cofactor biosynthesis; biotin biosynthesis; biotin from 7,8-diaminononanoate: step 1/2. Catalyzes a mechanistically unusual reaction, the ATP-dependent insertion of CO2 between the N7 and N8 nitrogen atoms of 7,8-diaminopelargonic acid (DAPA, also called 7,8-diammoniononanoate) to form a ureido ring. This chain is ATP-dependent dethiobiotin synthetase BioD, found in Geobacillus kaustophilus (strain HTA426).